Here is a 64-residue protein sequence, read N- to C-terminus: Metallothionein-like protein 1 (64 aa).

This sequence belongs to the metallothionein superfamily. Type 15 family.

In terms of biological role, metallothioneins have a high content of cysteine residues that bind various heavy metals. The protein is Metallothionein-like protein 1 (MT1) of Prunus avium (Cherry).